A 430-amino-acid polypeptide reads, in one-letter code: UDP-N-acetylglucosamine 1-carboxyvinyltransferase 1 (430 aa).

Lys-22–Asn-23 lines the phosphoenolpyruvate pocket. Arg-102 is a UDP-N-acetyl-alpha-D-glucosamine binding site. Cys-126 acts as the Proton donor in catalysis. Cys-126 bears the 2-(S-cysteinyl)pyruvic acid O-phosphothioketal mark. UDP-N-acetyl-alpha-D-glucosamine contacts are provided by residues Arg-131–Leu-135, Lys-172–Val-175, Asp-317, and Ile-339.

This sequence belongs to the EPSP synthase family. MurA subfamily.

It localises to the cytoplasm. The enzyme catalyses phosphoenolpyruvate + UDP-N-acetyl-alpha-D-glucosamine = UDP-N-acetyl-3-O-(1-carboxyvinyl)-alpha-D-glucosamine + phosphate. Its pathway is cell wall biogenesis; peptidoglycan biosynthesis. Cell wall formation. Adds enolpyruvyl to UDP-N-acetylglucosamine. This Mesorhizobium japonicum (strain LMG 29417 / CECT 9101 / MAFF 303099) (Mesorhizobium loti (strain MAFF 303099)) protein is UDP-N-acetylglucosamine 1-carboxyvinyltransferase 1.